The chain runs to 67 residues: Inosine/xanthosine triphosphatase (67 aa).

This sequence belongs to the YjjX NTPase family. Homodimer. Mg(2+) is required as a cofactor. The cofactor is Mn(2+).

The catalysed reaction is XTP + H2O = XDP + phosphate + H(+). The enzyme catalyses ITP + H2O = IDP + phosphate + H(+). Its function is as follows. Phosphatase that hydrolyzes non-canonical purine nucleotides such as XTP and ITP to their respective diphosphate derivatives. Probably excludes non-canonical purines from DNA/RNA precursor pool, thus preventing their incorporation into DNA/RNA and avoiding chromosomal lesions. The chain is Inosine/xanthosine triphosphatase from Enterobacter cloacae.